A 494-amino-acid chain; its full sequence is Hydroxyneurosporene desaturase (494 aa).

This sequence belongs to the carotenoid/retinoid oxidoreductase family.

It catalyses the reaction rhodopin + A = (3E)-3,4-didehydrorhodopin + AH2. It functions in the pathway carotenoid biosynthesis; spheroidene biosynthesis. Catalyzes the introduction of C-3,4 double bonds into 1-hydroxyneurosporene (1-HO-Neu) to yield demethylspheroidene (DMS). The chain is Hydroxyneurosporene desaturase (crtD) from Rhodobacter capsulatus (strain ATCC BAA-309 / NBRC 16581 / SB1003).